The following is a 694-amino-acid chain: Polyribonucleotide nucleotidyltransferase (694 aa).

Mg(2+) contacts are provided by aspartate 486 and aspartate 492. The KH domain occupies 553–612 (PRIETMQIKPTKIASVIGPGGKQIRQIIEETGVQIDVNDLGVVSISASSASAINKAKEII). Positions 622–690 (GKTYRGRVTS…EKGQLKLSHK (69 aa)) constitute an S1 motif domain.

The protein belongs to the polyribonucleotide nucleotidyltransferase family. Requires Mg(2+) as cofactor.

It is found in the cytoplasm. It carries out the reaction RNA(n+1) + phosphate = RNA(n) + a ribonucleoside 5'-diphosphate. Its function is as follows. Involved in mRNA degradation. Catalyzes the phosphorolysis of single-stranded polyribonucleotides processively in the 3'- to 5'-direction. This Chlamydia pneumoniae (Chlamydophila pneumoniae) protein is Polyribonucleotide nucleotidyltransferase.